The sequence spans 262 residues: Probable carboxylesterase Culp3 (262 aa).

An N-terminal signal peptide occupies residues 1–41 (MNNRPIRLLTSGRAGLGAGALITAVVLLIALGAVWTPVAFA). C44 and C114 are joined by a disulfide. S125 acts as the Nucleophile in catalysis. C188 and C195 are joined by a disulfide. D192 is a catalytic residue. The Proton donor/acceptor role is filled by H206. Positions 241 to 262 (LPGSVLQMPGTAAPAPESLHGR) are disordered.

Belongs to the cutinase family.

The protein resides in the secreted. In terms of biological role, shows weak esterase activity with the p-nitrophenol-linked aliphatic ester pNP-butyrate. Does not exhibit cutinase activity. This is Probable carboxylesterase Culp3 (cut3) from Mycobacterium tuberculosis (strain ATCC 25618 / H37Rv).